A 178-amino-acid polypeptide reads, in one-letter code: MLEGIVRESIGRKAAKALKRDGYLIANIYGKGLENINAAFKVNEFIKEVRKKTTLIFDVKVGSQTLSVVVVDYQKDPVTAELKHVDLKVAQKGVISKYMVPVKITGTAIGLKNKGVLIQSKRRLKVKCAAENLPNFFELDVSKLDVGDALLVRDIVVPAGVTMIDADRVAVVGVEKAR.

The protein belongs to the bacterial ribosomal protein bL25 family. CTC subfamily. In terms of assembly, part of the 50S ribosomal subunit; part of the 5S rRNA/L5/L18/L25 subcomplex. Contacts the 5S rRNA. Binds to the 5S rRNA independently of L5 and L18.

Its function is as follows. This is one of the proteins that binds to the 5S RNA in the ribosome where it forms part of the central protuberance. In Campylobacter jejuni subsp. jejuni serotype O:6 (strain 81116 / NCTC 11828), this protein is Large ribosomal subunit protein bL25.